We begin with the raw amino-acid sequence, 415 residues long: Casein kinase I isoform delta (415 aa).

In terms of domain architecture, Protein kinase spans 9–277 (YRLGRKIGSG…YLRQLFRNLF (269 aa)). ATP-binding positions include 15–23 (IGSGSFGDI) and Lys-38. Asp-128 acts as the Proton acceptor in catalysis. The segment at 278 to 364 (HRQGFSYDYV…TSPRPVSGME (87 aa)) is centrosomal localization signal (CLS). The span at 301–315 (ADDAERERRDREERL) shows a compositional bias: basic and acidic residues. Residues 301–415 (ADDAERERRD…SSGLQSVVHR (115 aa)) are disordered. The autoinhibitory stretch occupies residues 317–342 (HSRNPATRGLPSTASGRLRGTQEVAP). Phosphoserine occurs at positions 328 and 331. The segment covering 347-358 (TPTSHTANTSPR) has biased composition (polar residues). Ser-370 bears the Phosphoserine mark. The residue at position 375 (Arg-375) is an Omega-N-methylarginine. Residues 380–400 (NVSSSDLTGRQDTSRMSTSQI) show a composition bias toward polar residues. Residues Ser-382, Ser-383, Ser-384, Pro-401, Ser-407, and Ser-411 each carry the phosphoserine modification.

It belongs to the protein kinase superfamily. CK1 Ser/Thr protein kinase family. Casein kinase I subfamily. As to quaternary structure, monomer. Component of the circadian core oscillator, which includes the CRY proteins, CLOCK, or NPAS2, BMAL1 or BMAL2, CSNK1D and/or CSNK1E, TIMELESS and the PER proteins. Interacts directly with PER1 and PER2 which may lead to their degradation. Interacts with MAP1A. Interacts with MAPT/TAU, DBNDD2, AIB1/NCOA3 and ESR1. Interacts with AKAP9/AKAP450; this interaction promotes centrosomal subcellular location. Binds to tubulins in mitotic cells upon DNA damage. Interacts with GJA1. Interacts with SNAPIN. Interacts with DNMT1. Interacts with DDX3X; this interaction enhances CSNK1D kinase activity in vitro, but it is unclear whether this interaction is physiologically relevant. Interacts with FAM83A, FAM83B, FAM83E and FAM83H (via DUF1669). Autophosphorylated on serine and threonine residues; this autophosphorylation represses activity. Reactivated by phosphatase-mediated dephosphorylation. May be dephosphorylated by PP1. Expressed ubiquitously. However, kinase activity is not uniform, with highest kinase activity in splenocytes.

It localises to the cytoplasm. It is found in the nucleus. The protein resides in the cytoskeleton. Its subcellular location is the microtubule organizing center. The protein localises to the centrosome. It localises to the perinuclear region. It is found in the cell membrane. The protein resides in the spindle. Its subcellular location is the golgi apparatus. The catalysed reaction is L-seryl-[protein] + ATP = O-phospho-L-seryl-[protein] + ADP + H(+). The enzyme catalyses L-threonyl-[protein] + ATP = O-phospho-L-threonyl-[protein] + ADP + H(+). It catalyses the reaction L-seryl-[tau protein] + ATP = O-phospho-L-seryl-[tau protein] + ADP + H(+). It carries out the reaction L-threonyl-[tau protein] + ATP = O-phospho-L-threonyl-[tau protein] + ADP + H(+). Exhibits substrate-dependent heparin activation. Drug-mediated inhibition leads to a delay of the oscillations with the magnitude of this effect dependent upon the timing of drug administration. Inhibited by phosphorylation. In terms of biological role, essential serine/threonine-protein kinase that regulates diverse cellular growth and survival processes including Wnt signaling, DNA repair and circadian rhythms. It can phosphorylate a large number of proteins. Casein kinases are operationally defined by their preferential utilization of acidic proteins such as caseins as substrates. Phosphorylates connexin-43/GJA1, MAP1A, SNAPIN, MAPT/TAU, TOP2A, DCK, HIF1A, EIF6, p53/TP53, DVL2, DVL3, ESR1, AIB1/NCOA3, DNMT1, PKD2, YAP1, PER1 and PER2. Central component of the circadian clock. In balance with PP1, determines the circadian period length through the regulation of the speed and rhythmicity of PER1 and PER2 phosphorylation. Controls PER1 and PER2 nuclear transport and degradation. YAP1 phosphorylation promotes its SCF(beta-TRCP) E3 ubiquitin ligase-mediated ubiquitination and subsequent degradation. DNMT1 phosphorylation reduces its DNA-binding activity. Phosphorylation of ESR1 and AIB1/NCOA3 stimulates their activity and coactivation. Phosphorylation of DVL2 and DVL3 regulates WNT3A signaling pathway that controls neurite outgrowth. Phosphorylates NEDD9/HEF1. EIF6 phosphorylation promotes its nuclear export. Triggers down-regulation of dopamine receptors in the forebrain. Activates DCK in vitro by phosphorylation. TOP2A phosphorylation favors DNA cleavable complex formation. May regulate the formation of the mitotic spindle apparatus in extravillous trophoblast. Modulates connexin-43/GJA1 gap junction assembly by phosphorylation. Probably involved in lymphocyte physiology. Regulates fast synaptic transmission mediated by glutamate. In Mus musculus (Mouse), this protein is Casein kinase I isoform delta (Csnk1d).